A 239-amino-acid polypeptide reads, in one-letter code: Protein GrpE (239 aa).

2 disordered regions span residues Met1–Glu50 and Met209–Val239. A compositionally biased stretch (polar residues) spans Val16–Ala30. Residues Glu218 to Val239 show a composition bias toward acidic residues.

The protein belongs to the GrpE family. Homodimer.

It is found in the cytoplasm. Participates actively in the response to hyperosmotic and heat shock by preventing the aggregation of stress-denatured proteins, in association with DnaK and GrpE. It is the nucleotide exchange factor for DnaK and may function as a thermosensor. Unfolded proteins bind initially to DnaJ; upon interaction with the DnaJ-bound protein, DnaK hydrolyzes its bound ATP, resulting in the formation of a stable complex. GrpE releases ADP from DnaK; ATP binding to DnaK triggers the release of the substrate protein, thus completing the reaction cycle. Several rounds of ATP-dependent interactions between DnaJ, DnaK and GrpE are required for fully efficient folding. The protein is Protein GrpE of Prochlorococcus marinus (strain MIT 9312).